A 399-amino-acid chain; its full sequence is Elongation factor Tu (399 aa).

The tr-type G domain maps to 10-207; the sequence is KTHMNVGTIG…AVDSYFPDPV (198 aa). Positions 19-26 are G1; the sequence is GHIDHGKT. 19–26 contacts GTP; sequence GHIDHGKT. Position 26 (threonine 26) interacts with Mg(2+). Residues 60–64 are G2; the sequence is GITIN. The interval 81-84 is G3; that stretch reads DCPG. GTP contacts are provided by residues 81-85 and 136-139; these read DCPGH and NKVD. Residues 136–139 form a G4 region; it reads NKVD. A G5 region spans residues 174-176; sequence SAL.

Belongs to the TRAFAC class translation factor GTPase superfamily. Classic translation factor GTPase family. EF-Tu/EF-1A subfamily. Monomer.

It localises to the cytoplasm. It catalyses the reaction GTP + H2O = GDP + phosphate + H(+). GTP hydrolase that promotes the GTP-dependent binding of aminoacyl-tRNA to the A-site of ribosomes during protein biosynthesis. This is Elongation factor Tu from Petrotoga mobilis (strain DSM 10674 / SJ95).